The chain runs to 342 residues: P2Y purinoceptor 12 (342 aa).

At 1–27 the chain is on the extracellular side; the sequence is MQAIDNLTSAPGNTSLCTRDYKITQVL. 2 N-linked (GlcNAc...) asparagine glycosylation sites follow: Asn6 and Asn13. 2 disulfides stabilise this stretch: Cys17/Cys270 and Cys97/Cys175. The chain crosses the membrane as a helical span at residues 28–50; sequence FPLLYTVLFFVGLITNSLAMRIF. Over 51-61 the chain is Cytoplasmic; sequence FQIRSKSNFII. Ser55 and Ser57 each carry phosphoserine. The helical transmembrane segment at 62–82 threads the bilayer; sequence FLKNTVISDLLMILTFPFKIL. Over 83-97 the chain is Extracellular; that stretch reads SDAKLGAGPLRTFVC. ADP contacts are provided by Arg93, Cys97, and Tyr105. A helical transmembrane segment spans residues 98 to 118; the sequence is QVTSVIFYFTMYISISFLGLI. Residues 119–142 are Cytoplasmic-facing; that stretch reads TIDRYQKTTRPFKTSNPKNLLGAK. A helical transmembrane segment spans residues 143–162; that stretch reads ILSVLIWAFMFLLSLPNMIL. ADP contacts are provided by residues 156–159, 175–179, His187, and Asn191; these read SLPN and CSFLK. Residues 163–185 lie on the Extracellular side of the membrane; that stretch reads TNRRPRDKNVKKCSFLKSEFGLV. Residues 186–207 form a helical membrane-spanning segment; that stretch reads WHEIVNYICQVIFWINFLIVIV. At 208 to 233 the chain is on the cytoplasmic side; that stretch reads CYTLITKELYRSYVRTRGVGKVPRKK. Residues 234–259 traverse the membrane as a helical segment; that stretch reads VNVKVFIIIAVFFICFVPFHFARIPY. Residues 256-259, Gln263, and Lys280 each bind ADP; that span reads RIPY. Topologically, residues 260–278 are extracellular; the sequence is TLSQTRDVFDCAAENTLFY. A helical membrane pass occupies residues 279–298; it reads VKESTLWLTSLNACLDPFIY. Topologically, residues 299–342 are cytoplasmic; the sequence is FFLCKSFRNSLISMLKCPNSATSQSQDNRKKEQDGGDPNEETPM. Positions 317 to 342 are disordered; sequence NSATSQSQDNRKKEQDGGDPNEETPM. The segment covering 333–342 has biased composition (acidic residues); the sequence is GGDPNEETPM.

Belongs to the G-protein coupled receptor 1 family.

The protein resides in the cell membrane. Functionally, receptor for ADP and ATP coupled to G-proteins that inhibit the adenylyl cyclase second messenger system. Required for normal platelet aggregation and blood coagulation. This Macaca fascicularis (Crab-eating macaque) protein is P2Y purinoceptor 12 (P2RY12).